An 840-amino-acid chain; its full sequence is DNA mismatch repair protein MutS (840 aa).

Residue 601–608 (GPNMSGKS) participates in ATP binding.

This sequence belongs to the DNA mismatch repair MutS family.

Functionally, this protein is involved in the repair of mismatches in DNA. It is possible that it carries out the mismatch recognition step. This protein has a weak ATPase activity. This chain is DNA mismatch repair protein MutS, found in Lactococcus lactis subsp. cremoris (strain MG1363).